A 380-amino-acid polypeptide reads, in one-letter code: 3-methylitaconate isomerase (380 aa).

The protein belongs to the PrpF family. In terms of assembly, homotetramer.

It carries out the reaction 2-methylene-3-methylsuccinate = dimethylmaleate. The protein operates within cofactor degradation; nicotinate degradation; propanoate and pyruvate from 6-hydroxynicotinate: step 6/8. Its activity is regulated as follows. Inhibited by oxidized glutathione, p-chloromercuriphenylsulfonic acid and iodoacetic acid. Not inhibited by the chelating agent alpha,alpha-dipyridyl. Activity is slightly increased by EDTA. Not activated by Fe(2+), Mg(2+), Mn(2+) or Ca(2+). Unaffected by K(+), Na(+), NH4(+), Rb(+) or Li(+). Functionally, catalyzes the reversible isomerization of (R)-3-methylitaconate to 2,3-dimethylmaleate. Has very low isomerase activity with itaconate. In Eubacterium barkeri (Clostridium barkeri), this protein is 3-methylitaconate isomerase (mii).